Reading from the N-terminus, the 359-residue chain is Type-1 angiotensin II receptor (359 aa).

Residues 1–25 are Extracellular-facing; that stretch reads MVPNYSTEETVKRIHVDCPVSGRHS. N-linked (GlcNAc...) asparagine glycosylation occurs at Asn-4. Asp-17 serves as a coordination point for angiotensin II. Disulfide bonds link Cys-18–Cys-274 and Cys-101–Cys-180. The chain crosses the membrane as a helical span at residues 26–55; that stretch reads YIYIMVPTVYSIIFIIGIFGNSLVVIVIYC. Residues 56–61 are Cytoplasmic-facing; sequence YMKLKT. Residues 62–89 traverse the membrane as a helical segment; sequence VASIFLLNLALADLCFLITLPLWAAYTA. Residues 90–98 are Extracellular-facing; it reads MEYQWPFGN. A helical membrane pass occupies residues 99 to 125; the sequence is CLCKLASAGISFNLYASVFLLTCLSID. Topologically, residues 126–141 are cytoplasmic; the sequence is RYLAIVHPVKSRIRRT. A helical transmembrane segment spans residues 142 to 165; the sequence is MFVARVTCIVIWLLAGVASLPVII. Residues 166 to 190 lie on the Extracellular side of the membrane; it reads HRNIFFAENLNMTVCGFRYDNNNTT. Angiotensin II is bound at residue Arg-167. Asn-176 carries an N-linked (GlcNAc...) asparagine glycan. Angiotensin II-binding residues include Phe-182 and Tyr-184. N-linked (GlcNAc...) asparagine glycans are attached at residues Asn-187 and Asn-188. The chain crosses the membrane as a helical span at residues 191–216; the sequence is LRVGLGLSKNLLGFLIPFLIILTSYT. An angiotensin II-binding site is contributed by Lys-199. At 217 to 239 the chain is on the cytoplasmic side; sequence LIWKTLKKAYQIQRNKTRNDDIF. The helical transmembrane segment at 240-268 threads the bilayer; that stretch reads KMIVAIVFFFFFSWIPHQVFTFLDVLIQL. The Extracellular segment spans residues 269-278; that stretch reads HVITDCKITD. A helical transmembrane segment spans residues 279 to 304; sequence IVDTAMPFTICIAYFNNCLNPFFYVF. The Cytoplasmic portion of the chain corresponds to 305-359; that stretch reads FGKNFKKYFLQLIKYIPPNVSTHPSLTTKMSSLSYRPPENIRLPTKKTAGSFDTE.

Belongs to the G-protein coupled receptor 1 family. C-terminal Ser or Thr residues may be phosphorylated. Adrenal medulla.

Its subcellular location is the cell membrane. Functionally, receptor for angiotensin II, a vasoconstricting peptide, which acts as a key regulator of blood pressure and sodium retention by the kidney. The activated receptor in turn couples to G-alpha proteins G(q) (GNAQ, GNA11, GNA14 or GNA15) and thus activates phospholipase C and increases the cytosolic Ca(2+) concentrations, which in turn triggers cellular responses such as stimulation of protein kinase C. The polypeptide is Type-1 angiotensin II receptor (AGTR1) (Meleagris gallopavo (Wild turkey)).